A 260-amino-acid polypeptide reads, in one-letter code: Hydroxyethylthiazole kinase 1 (260 aa).

Residue M39 coordinates substrate. ATP contacts are provided by R115 and T160. Position 187 (G187) interacts with substrate.

This sequence belongs to the Thz kinase family. Requires Mg(2+) as cofactor.

It catalyses the reaction 5-(2-hydroxyethyl)-4-methylthiazole + ATP = 4-methyl-5-(2-phosphooxyethyl)-thiazole + ADP + H(+). It functions in the pathway cofactor biosynthesis; thiamine diphosphate biosynthesis; 4-methyl-5-(2-phosphoethyl)-thiazole from 5-(2-hydroxyethyl)-4-methylthiazole: step 1/1. Its function is as follows. Catalyzes the phosphorylation of the hydroxyl group of 4-methyl-5-beta-hydroxyethylthiazole (THZ). This chain is Hydroxyethylthiazole kinase 1, found in Streptococcus pneumoniae serotype 4 (strain ATCC BAA-334 / TIGR4).